Consider the following 124-residue polypeptide: MAPTKKGEKKKGRSAINEVVTREYTINVHKRIHGVGFKKRAPRAIKEIRKFAVKEMGTPDVRIDTRLNKAVWSKGVRNVPYRIRVRLSRKRNEDEDSPNKLYTLVTYVPVTTCKGLQTVNVDEN.

The protein belongs to the eukaryotic ribosomal protein eL31 family. Component of the large ribosomal subunit.

The protein localises to the cytoplasm. Its function is as follows. Component of the large ribosomal subunit. The ribosome is a large ribonucleoprotein complex responsible for the synthesis of proteins in the cell. This Paralichthys olivaceus (Bastard halibut) protein is Large ribosomal subunit protein eL31 (rpl31).